We begin with the raw amino-acid sequence, 130 residues long: Small ribosomal subunit protein uS9 (130 aa).

The interval G102–R130 is disordered. Basic residues predominate over residues K111–R130.

Belongs to the universal ribosomal protein uS9 family.

In Clostridium novyi (strain NT), this protein is Small ribosomal subunit protein uS9.